Consider the following 172-residue polypeptide: Large ribosomal subunit protein uL10 (172 aa).

It belongs to the universal ribosomal protein uL10 family. As to quaternary structure, part of the ribosomal stalk of the 50S ribosomal subunit. The N-terminus interacts with L11 and the large rRNA to form the base of the stalk. The C-terminus forms an elongated spine to which L12 dimers bind in a sequential fashion forming a multimeric L10(L12)X complex.

Its function is as follows. Forms part of the ribosomal stalk, playing a central role in the interaction of the ribosome with GTP-bound translation factors. The chain is Large ribosomal subunit protein uL10 from Brucella suis biovar 1 (strain 1330).